Reading from the N-terminus, the 105-residue chain is Large ribosomal subunit protein uL24 (105 aa).

The protein belongs to the universal ribosomal protein uL24 family. In terms of assembly, part of the 50S ribosomal subunit.

One of two assembly initiator proteins, it binds directly to the 5'-end of the 23S rRNA, where it nucleates assembly of the 50S subunit. In terms of biological role, one of the proteins that surrounds the polypeptide exit tunnel on the outside of the subunit. This is Large ribosomal subunit protein uL24 from Mycobacterium leprae (strain Br4923).